Consider the following 532-residue polypeptide: Glutamate--cysteine ligase (532 aa).

It belongs to the glutamate--cysteine ligase type 1 family. Type 1 subfamily.

The catalysed reaction is L-cysteine + L-glutamate + ATP = gamma-L-glutamyl-L-cysteine + ADP + phosphate + H(+). It participates in sulfur metabolism; glutathione biosynthesis; glutathione from L-cysteine and L-glutamate: step 1/2. The protein is Glutamate--cysteine ligase of Pseudomonas fluorescens (strain Pf0-1).